A 236-amino-acid polypeptide reads, in one-letter code: Purine nucleoside phosphorylase DeoD-type (236 aa).

An a purine D-ribonucleoside-binding site is contributed by H4. Phosphate-binding positions include G20, R24, R43, and 87 to 90; that span reads RVGT. Residues 179-181 and 203-204 contribute to the a purine D-ribonucleoside site; these read EME and SD. The Proton donor role is filled by D204.

The protein belongs to the PNP/UDP phosphorylase family. In terms of assembly, homohexamer; trimer of homodimers.

The catalysed reaction is a purine D-ribonucleoside + phosphate = a purine nucleobase + alpha-D-ribose 1-phosphate. It catalyses the reaction a purine 2'-deoxy-D-ribonucleoside + phosphate = a purine nucleobase + 2-deoxy-alpha-D-ribose 1-phosphate. In terms of biological role, catalyzes the reversible phosphorolytic breakdown of the N-glycosidic bond in the beta-(deoxy)ribonucleoside molecules, with the formation of the corresponding free purine bases and pentose-1-phosphate. The chain is Purine nucleoside phosphorylase DeoD-type from Streptococcus thermophilus (strain ATCC BAA-491 / LMD-9).